Reading from the N-terminus, the 322-residue chain is CRISPR-associated protein Cas1 1 (322 aa).

Glu-149, His-214, and Glu-229 together coordinate Mn(2+).

The protein belongs to the CRISPR-associated endonuclease Cas1 family. Homodimer, forms a heterotetramer with a Cas2 homodimer. Mg(2+) serves as cofactor. The cofactor is Mn(2+).

CRISPR (clustered regularly interspaced short palindromic repeat), is an adaptive immune system that provides protection against mobile genetic elements (viruses, transposable elements and conjugative plasmids). CRISPR clusters contain spacers, sequences complementary to antecedent mobile elements, and target invading nucleic acids. CRISPR clusters are transcribed and processed into CRISPR RNA (crRNA). Acts as a dsDNA endonuclease. Involved in the integration of spacer DNA into the CRISPR cassette. The polypeptide is CRISPR-associated protein Cas1 1 (Methanobrevibacter ruminantium (strain ATCC 35063 / DSM 1093 / JCM 13430 / OCM 146 / M1) (Methanobacterium ruminantium)).